The following is a 304-amino-acid chain: MKEFIVLSEEVKAGQAKGLPIVALESTIISHGMPYPQNVQTAREVEQIIRDNGAVPATIALIDGKIKIGLSDEELEMFGNAQGVAKASRRDLGYLLATKKLGATTVAATMICAELAGIEIFVTGGIGGVHRGAETTMDVSADLEELAQTNVAVICAGAKSILDIGLTLEYLETKGVPVVGYGTDELPAFYTRQSGFDVNFQLDTPEEIAEMLSAKWQLGLKGGAVIANPIPEAEALEHGFITNIIEKALVEAEENGIQGKNVTPFLLGKVKELTEGKSLDANIALVKNNAVVGAKIAVAFNQLH.

The Proton donor role is filled by E25. Substrate is bound by residues K86 and V106. D138 provides a ligand contact to Mn(2+). 140-142 lines the substrate pocket; sequence SAD. The active-site Nucleophile is the K159.

Belongs to the pseudouridine-5'-phosphate glycosidase family. Homotrimer. It depends on Mn(2+) as a cofactor.

The enzyme catalyses D-ribose 5-phosphate + uracil = psi-UMP + H2O. Functionally, catalyzes the reversible cleavage of pseudouridine 5'-phosphate (PsiMP) to ribose 5-phosphate and uracil. Functions biologically in the cleavage direction, as part of a pseudouridine degradation pathway. This Lysinibacillus sphaericus (strain C3-41) protein is Pseudouridine-5'-phosphate glycosidase.